We begin with the raw amino-acid sequence, 414 residues long: Isocitrate dehydrogenase [NADP] cytoplasmic (414 aa).

Position 2 is an N-acetylserine (serine 2). Tyrosine 42 carries the phosphotyrosine modification. 75 to 77 is a binding site for NADP(+); the sequence is TIT. A substrate-binding site is contributed by threonine 77. Position 81 is an N6-acetyllysine (lysine 81). Arginine 82 provides a ligand contact to NADP(+). Residues 94-100 and arginine 109 contribute to the substrate site; that span reads SPNGTIR. An N6-succinyllysine modification is found at lysine 126. Substrate contacts are provided by arginine 132 and lysine 212. 3 positions are modified to N6-acetyllysine: lysine 224, lysine 233, and lysine 243. Aspartate 252 contributes to the Mn(2+) binding site. Lysine 260 contributes to the NADP(+) binding site. 2 residues coordinate Mn(2+): aspartate 275 and aspartate 279. Position 310–315 (310–315) interacts with NADP(+); the sequence is GTVTRH. Lysine 321 is modified (N6-acetyllysine). NADP(+) is bound at residue asparagine 328. Residue serine 389 is modified to Phosphoserine. Lysine 400 bears the N6-succinyllysine mark.

This sequence belongs to the isocitrate and isopropylmalate dehydrogenases family. As to quaternary structure, homodimer. The cofactor is Mg(2+). Requires Mn(2+) as cofactor. In terms of processing, acetylation at Lys-374 dramatically reduces catalytic activity.

It localises to the cytoplasm. It is found in the cytosol. The protein resides in the peroxisome. It catalyses the reaction D-threo-isocitrate + NADP(+) = 2-oxoglutarate + CO2 + NADPH. In terms of biological role, catalyzes the NADP(+)-dependent oxidative decarboxylation of isocitrate (D-threo-isocitrate) to 2-ketoglutarate (2-oxoglutarate), which is required by other enzymes such as the phytanoyl-CoA dioxygenase. Plays a critical role in the generation of NADPH, an important cofactor in many biosynthesis pathways. May act as a corneal epithelial crystallin and may be involved in maintaining corneal epithelial transparency. In Homo sapiens (Human), this protein is Isocitrate dehydrogenase [NADP] cytoplasmic (IDH1).